Here is a 437-residue protein sequence, read N- to C-terminus: 5-hydroxytryptamine receptor 3B (437 aa).

The first 21 residues, 1–21 (MILLWSCLLVAVVGILGTATP), serve as a signal peptide directing secretion. Over 22–238 (QPGNSSLHRL…VVIRRCPLAY (217 aa)) the chain is Extracellular. N-linked (GlcNAc...) asparagine glycans are attached at residues Asn25, Asn92, and Asn134. An intrachain disulfide couples Cys151 to Cys165. A helical transmembrane segment spans residues 239-259 (VVSLLIPSIFLMLVDLGSFYL). Residues 260-264 (PPNCR) lie on the Cytoplasmic side of the membrane. A helical transmembrane segment spans residues 265-282 (ARIVFKTNVLVGYTVFRV). Asn283 is a glycosylation site (N-linked (GlcNAc...) asparagine). Topologically, residues 283-292 (NMSDEVPRSA) are extracellular. Residues 293-313 (GCTPLIGVFFTVCMALLVLSL) traverse the membrane as a helical segment. At 314-410 (SKSILLIKFL…WLAILYRFDQ (97 aa)) the chain is on the cytoplasmic side. The HA-stretch; determines single-channel conductance in 5-HT3 receptors stretch occupies residues 377-409 (FWFQFRSINNSLRTRDQIHQKEVEWLAILYRFD). A helical transmembrane segment spans residues 411-431 (LLFRIYLAVLGLYTVTLCSLW). Residues 432 to 437 (ALWSRM) lie on the Extracellular side of the membrane.

It belongs to the ligand-gated ion channel (TC 1.A.9) family. 5-hydroxytryptamine receptor (TC 1.A.9.2) subfamily. HTR3B sub-subfamily. As to quaternary structure, forms homopentameric as well as heteropentameric serotonin-activated cation-selective channel complexes with HTR3A. The homomeric complex is not functional. Heteropentameric complexes display properties which resemble that of neuronal serotonin-activated channels in vivo. N-glycosylation is required for membrane localization.

Its subcellular location is the postsynaptic cell membrane. It localises to the cell membrane. It catalyses the reaction Na(+)(in) = Na(+)(out). The enzyme catalyses K(+)(in) = K(+)(out). The catalysed reaction is Ca(2+)(in) = Ca(2+)(out). Its function is as follows. Forms serotonin (5-hydroxytryptamine/5-HT3)-activated cation-selective channel complexes, which when activated cause fast, depolarizing responses in neurons. This Mus musculus (Mouse) protein is 5-hydroxytryptamine receptor 3B.